The chain runs to 224 residues: MKIGGIDEAGRGPAIGPLVVATVVVDEKNIEKLRNIGVKDSKQLTPHERKNLFSQITSIADDYKIVIVSPEEIDNRSGTMNELEVEKFALALNSLQIKPALIYADAADVDANRFASLIERRLNYKAKIIAEHKADAKYPVVSAASILAKVVRDEEIEKLKKQYGDFGSGYPSDPKTKKWLEEYYKKHNSFPPIVRRTWETVRKIEESIKAKKSQLTLDKFFKKP.

The RNase H type-2 domain occupies 1-210 (MKIGGIDEAG…VRKIEESIKA (210 aa)). Residues Asp7, Glu8, and Asp105 each coordinate a divalent metal cation.

It belongs to the RNase HII family. Mn(2+) is required as a cofactor. It depends on Mg(2+) as a cofactor.

Its subcellular location is the cytoplasm. It catalyses the reaction Endonucleolytic cleavage to 5'-phosphomonoester.. Functionally, endonuclease that specifically degrades the RNA of RNA-DNA hybrids. This chain is Ribonuclease HII, found in Pyrococcus furiosus (strain ATCC 43587 / DSM 3638 / JCM 8422 / Vc1).